The following is an 82-amino-acid chain: Small ribosomal subunit protein bS16 (82 aa).

This sequence belongs to the bacterial ribosomal protein bS16 family.

The polypeptide is Small ribosomal subunit protein bS16 (Deinococcus deserti (strain DSM 17065 / CIP 109153 / LMG 22923 / VCD115)).